The following is a 542-amino-acid chain: Peptide chain release factor 3 (542 aa).

In terms of domain architecture, tr-type G spans 14 to 283; it reads ELRRNFAIIS…YFLEYALKPG (270 aa). GTP-binding positions include 23 to 30, 91 to 95, and 145 to 148; these read SHPDAGKT, DTPGH, and NKLD.

This sequence belongs to the TRAFAC class translation factor GTPase superfamily. Classic translation factor GTPase family. PrfC subfamily.

It localises to the cytoplasm. In terms of biological role, increases the formation of ribosomal termination complexes and stimulates activities of RF-1 and RF-2. It binds guanine nucleotides and has strong preference for UGA stop codons. It may interact directly with the ribosome. The stimulation of RF-1 and RF-2 is significantly reduced by GTP and GDP, but not by GMP. This is Peptide chain release factor 3 from Nostoc punctiforme (strain ATCC 29133 / PCC 73102).